The chain runs to 28 residues: Antibacterial protein LC3 (28 aa).

Antibacterial activity against X.campestris, especially strain G, and P.solacearum PO1. This Bacillus subtilis protein is Antibacterial protein LC3.